We begin with the raw amino-acid sequence, 92 residues long: MSLIGLDLFDFVKGIVLLALTSGATYAIGKQFFSSNYCAIARIIQALLLFASSFLFDSAGALILGVIVLIIGVGNYLAETNSKFAFLDPNLA.

Helical transmembrane passes span 11 to 28, 32 to 52, and 54 to 74; these read FVKGIVLLALTSGATYAI, FFSSNYCAIARIIQALLLFAS, and FLFDSAGALILGVIVLIIGVG.

The protein resides in the host membrane. The sequence is that of Putative transmembrane protein ORF92 from Acidianus convivator (ABV).